Reading from the N-terminus, the 332-residue chain is Flotillin-like protein FloA (332 aa).

2 consecutive transmembrane segments (helical) span residues 6 to 26 and 28 to 48; these read LGYL…FSFV and VGLW…YMIG.

This sequence belongs to the flotillin-like FloA family. In terms of assembly, homooligomerizes.

The protein resides in the cell membrane. Its subcellular location is the membrane raft. In terms of biological role, found in functional membrane microdomains (FMM) that may be equivalent to eukaryotic membrane rafts. FMMs are highly dynamic and increase in number as cells age. Flotillins are thought to be important factors in membrane fluidity. This chain is Flotillin-like protein FloA, found in Symbiobacterium thermophilum (strain DSM 24528 / JCM 14929 / IAM 14863 / T).